A 211-amino-acid chain; its full sequence is Dual specificity protein phosphatase 26 (211 aa).

Residues 60-207 enclose the Tyrosine-protein phosphatase domain; the sequence is NHADEVWPGL…LLALDRRLRQ (148 aa). Cys-152 acts as the Phosphocysteine intermediate in catalysis.

Belongs to the protein-tyrosine phosphatase family. Non-receptor class dual specificity subfamily. In terms of assembly, interacts with HSF4. As to expression, brain. In the brain it is expressed ubiquitously except in the hippocampus. Expressed in embryonal cancers (retinoblastoma, neuroepithilioma and neuroblastoma) and in anaplatic thyroid cancer.

It is found in the cytoplasm. The protein localises to the nucleus. The protein resides in the golgi apparatus. It carries out the reaction O-phospho-L-tyrosyl-[protein] + H2O = L-tyrosyl-[protein] + phosphate. It catalyses the reaction O-phospho-L-seryl-[protein] + H2O = L-seryl-[protein] + phosphate. The catalysed reaction is O-phospho-L-threonyl-[protein] + H2O = L-threonyl-[protein] + phosphate. Functionally, inactivates MAPK1 and MAPK3 which leads to dephosphorylation of heat shock factor protein 4 and a reduction in its DNA-binding activity. Inhibits MAP kinase p38 by dephosphorylating it and inhibits p38-mediated apoptosis in anaplastic thyroid cancer cells. Can also induce activation of MAP kinase p38 and c-Jun N-terminal kinase (JNK). The chain is Dual specificity protein phosphatase 26 (DUSP26) from Homo sapiens (Human).